Reading from the N-terminus, the 92-residue chain is Probable Fe(2+)-trafficking protein (92 aa).

Belongs to the Fe(2+)-trafficking protein family.

Could be a mediator in iron transactions between iron acquisition and iron-requiring processes, such as synthesis and/or repair of Fe-S clusters in biosynthetic enzymes. The polypeptide is Probable Fe(2+)-trafficking protein (Xanthomonas campestris pv. campestris (strain 8004)).